A 452-amino-acid chain; its full sequence is Protein FAM81B (452 aa).

Composition is skewed to polar residues over residues 1 to 11 (MQLQFLGTLAS) and 38 to 55 (IMSS…TATA). The segment at 1-85 (MQLQFLGTLA…KVRLSPAKMS (85 aa)) is disordered. Coiled coils occupy residues 164 to 192 (IQTI…DQAA) and 329 to 452 (LGHI…LQEV).

This sequence belongs to the FAM81 family.

In Homo sapiens (Human), this protein is Protein FAM81B (FAM81B).